We begin with the raw amino-acid sequence, 525 residues long: Glucans biosynthesis protein G (525 aa).

Residues 1 to 35 (MIFRSVSNTDFRARVRTLLLAGSTALAFVAAPVWA) form the signal peptide.

This sequence belongs to the OpgD/OpgG family.

Its subcellular location is the periplasm. The protein operates within glycan metabolism; osmoregulated periplasmic glucan (OPG) biosynthesis. Functionally, involved in the biosynthesis of osmoregulated periplasmic glucans (OPGs). The polypeptide is Glucans biosynthesis protein G (Pseudomonas paraeruginosa (strain DSM 24068 / PA7) (Pseudomonas aeruginosa (strain PA7))).